The chain runs to 359 residues: Nicotinate-nucleotide--dimethylbenzimidazole phosphoribosyltransferase (359 aa).

Residue E318 is the Proton acceptor of the active site.

It belongs to the CobT family. In terms of assembly, homodimer.

The catalysed reaction is 5,6-dimethylbenzimidazole + nicotinate beta-D-ribonucleotide = alpha-ribazole 5'-phosphate + nicotinate + H(+). It participates in nucleoside biosynthesis; alpha-ribazole biosynthesis; alpha-ribazole from 5,6-dimethylbenzimidazole: step 1/2. Functionally, catalyzes the synthesis of alpha-ribazole-5'-phosphate from nicotinate mononucleotide (NAMN) and 5,6-dimethylbenzimidazole (DMB). The protein is Nicotinate-nucleotide--dimethylbenzimidazole phosphoribosyltransferase of Escherichia coli O8 (strain IAI1).